The following is a 255-amino-acid chain: Uridylate kinase (255 aa).

The disordered stretch occupies residues 1–21 (MSAAAAGRGERLNHAGNPGHR). Position 30–33 (30–33 (KLGG)) interacts with ATP. A UMP-binding site is contributed by G71. 2 residues coordinate ATP: G72 and R76. Residues D91 and 152-159 (MGLPYFST) each bind UMP. ATP contacts are provided by F185 and D188.

The protein belongs to the UMP kinase family. Homohexamer.

The protein localises to the cytoplasm. The catalysed reaction is UMP + ATP = UDP + ADP. It functions in the pathway pyrimidine metabolism; CTP biosynthesis via de novo pathway; UDP from UMP (UMPK route): step 1/1. With respect to regulation, inhibited by UTP. Its function is as follows. Catalyzes the reversible phosphorylation of UMP to UDP. The protein is Uridylate kinase of Mycobacterium leprae (strain TN).